The chain runs to 354 residues: Photosystem II protein D1 1 (354 aa).

The next 3 helical transmembrane spans lie at 29–46 (YIGWFGVLMIPTLLTATT), 118–133 (HFLIGVFCYMGREWEL), and 142–156 (WIAVAYSAPVAAATA). H118 provides a ligand contact to chlorophyll a. Y126 is a binding site for pheophytin a. D170 and E189 together coordinate [CaMn4O5] cluster. The helical transmembrane segment at 197 to 218 (FHQLGVAGVFGGALFSAMHGSL) threads the bilayer. Residue H198 participates in chlorophyll a binding. A quinone is bound by residues H215 and 264-265 (SF). Residue H215 coordinates Fe cation. Residue H272 participates in Fe cation binding. The chain crosses the membrane as a helical span at residues 274–288 (FLAAWPVIGIWFTAL). The [CaMn4O5] cluster site is built by H332, E333, D342, and A344. Residues 345–354 (AVEVAPAIRG) constitute a propeptide that is removed on maturation.

This sequence belongs to the reaction center PufL/M/PsbA/D family. As to quaternary structure, PSII is composed of 1 copy each of membrane proteins PsbA, PsbB, PsbC, PsbD, PsbE, PsbF, PsbH, PsbI, PsbJ, PsbK, PsbL, PsbM, PsbT, PsbX, PsbY, PsbZ, Psb30/Ycf12, peripheral proteins PsbO, CyanoQ (PsbQ), PsbU, PsbV and a large number of cofactors. It forms dimeric complexes. It depends on The D1/D2 heterodimer binds P680, chlorophylls that are the primary electron donor of PSII, and subsequent electron acceptors. It shares a non-heme iron and each subunit binds pheophytin, quinone, additional chlorophylls, carotenoids and lipids. D1 provides most of the ligands for the Mn4-Ca-O5 cluster of the oxygen-evolving complex (OEC). There is also a Cl(-1) ion associated with D1 and D2, which is required for oxygen evolution. The PSII complex binds additional chlorophylls, carotenoids and specific lipids. as a cofactor. Tyr-161 forms a radical intermediate that is referred to as redox-active TyrZ, YZ or Y-Z. In terms of processing, C-terminally processed by CtpA; processing is essential to allow assembly of the oxygen-evolving complex and thus photosynthetic growth.

The protein localises to the cellular thylakoid membrane. The catalysed reaction is 2 a plastoquinone + 4 hnu + 2 H2O = 2 a plastoquinol + O2. Its function is as follows. Photosystem II (PSII) is a light-driven water:plastoquinone oxidoreductase that uses light energy to abstract electrons from H(2)O, generating O(2) and a proton gradient subsequently used for ATP formation. It consists of a core antenna complex that captures photons, and an electron transfer chain that converts photonic excitation into a charge separation. The D1/D2 (PsbA/PsbD) reaction center heterodimer binds P680, the primary electron donor of PSII as well as several subsequent electron acceptors. The polypeptide is Photosystem II protein D1 1 (Synechococcus sp. (strain JA-3-3Ab) (Cyanobacteria bacterium Yellowstone A-Prime)).